The following is a 511-amino-acid chain: Probable G-protein coupled receptor 101 (511 aa).

The Extracellular segment spans residues M1–S35. N7 and N13 each carry an N-linked (GlcNAc...) asparagine glycan. The helical transmembrane segment at V36–L56 threads the bilayer. Residues H57–N67 are Cytoplasmic-facing. Residues R68–S90 form a helical membrane-spanning segment. Residues T91 to A106 are Extracellular-facing. A disulfide bridge links C104 with C182. The helical transmembrane segment at L107 to V127 threads the bilayer. Residues D128–Y149 are Cytoplasmic-facing. A helical membrane pass occupies residues I150–W170. Residues G171–S196 are Extracellular-facing. A helical membrane pass occupies residues V197 to G217. The Cytoplasmic portion of the chain corresponds to A218–R398. The span at D240–E261 shows a compositional bias: basic and acidic residues. Disordered stretches follow at residues D240–N315 and E367–P386. Positions P376 to D385 are enriched in polar residues. Residues V399–V419 traverse the membrane as a helical segment. Residues L420–Q432 lie on the Extracellular side of the membrane. The chain crosses the membrane as a helical span at residues W433 to Y453. At G454–P511 the chain is on the cytoplasmic side. Positions S476–P511 are disordered. Over residues P477–E490 the composition is skewed to basic and acidic residues.

It belongs to the G-protein coupled receptor 1 family. As to expression, expressed in the brain in hypothalamus.

It localises to the cell membrane. In terms of biological role, orphan receptor. The protein is Probable G-protein coupled receptor 101 (Gpr101) of Mus musculus (Mouse).